The following is a 312-amino-acid chain: Putative 1-aminocyclopropane-1-carboxylate deaminase (312 aa).

Lys42 bears the N6-(pyridoxal phosphate)lysine mark.

Belongs to the ACC deaminase/D-cysteine desulfhydrase family. The cofactor is pyridoxal 5'-phosphate.

It carries out the reaction 1-aminocyclopropane-1-carboxylate + H2O = 2-oxobutanoate + NH4(+). The chain is Putative 1-aminocyclopropane-1-carboxylate deaminase from Thermotoga maritima (strain ATCC 43589 / DSM 3109 / JCM 10099 / NBRC 100826 / MSB8).